We begin with the raw amino-acid sequence, 274 residues long: Probable formate transporter (274 aa).

A run of 7 helical transmembrane segments spans residues 31-51 (IVLS…AEVV), 62-82 (AGLV…LVVI), 118-138 (VFNL…TGIL), 176-196 (AFWR…LAIA), 200-220 (IIGK…IGFE), 226-246 (MFFI…FFMN), and 248-268 (LIPV…CLYW).

Belongs to the FNT transporter (TC 1.A.16) family.

It is found in the cell membrane. Its function is as follows. May act as a formate transporter. This Methanothermobacter thermautotrophicus (Methanobacterium thermoformicicum) protein is Probable formate transporter (fdhC).